We begin with the raw amino-acid sequence, 974 residues long: Isoleucine--tRNA ligase (974 aa).

Residues 69 to 79 (PYANGALHMGH) carry the 'HIGH' region motif. Residue glutamate 585 participates in L-isoleucyl-5'-AMP binding. The 'KMSKS' region signature appears at 626–630 (KMSKS). Residue lysine 629 participates in ATP binding. Zn(2+) contacts are provided by cysteine 939, cysteine 942, cysteine 959, and cysteine 962.

It belongs to the class-I aminoacyl-tRNA synthetase family. IleS type 1 subfamily. As to quaternary structure, monomer. Requires Zn(2+) as cofactor.

It localises to the cytoplasm. It catalyses the reaction tRNA(Ile) + L-isoleucine + ATP = L-isoleucyl-tRNA(Ile) + AMP + diphosphate. In terms of biological role, catalyzes the attachment of isoleucine to tRNA(Ile). As IleRS can inadvertently accommodate and process structurally similar amino acids such as valine, to avoid such errors it has two additional distinct tRNA(Ile)-dependent editing activities. One activity is designated as 'pretransfer' editing and involves the hydrolysis of activated Val-AMP. The other activity is designated 'posttransfer' editing and involves deacylation of mischarged Val-tRNA(Ile). The polypeptide is Isoleucine--tRNA ligase (Parasynechococcus marenigrum (strain WH8102)).